We begin with the raw amino-acid sequence, 225 residues long: tRNA (guanine-N(7)-)-methyltransferase (225 aa).

The S-adenosyl-L-methionine site is built by E56, E81, D108, and D131. Residue D131 is part of the active site. Residues K135, D167, and T204–E207 each bind substrate.

The protein belongs to the class I-like SAM-binding methyltransferase superfamily. TrmB family.

It carries out the reaction guanosine(46) in tRNA + S-adenosyl-L-methionine = N(7)-methylguanosine(46) in tRNA + S-adenosyl-L-homocysteine. It participates in tRNA modification; N(7)-methylguanine-tRNA biosynthesis. Functionally, catalyzes the formation of N(7)-methylguanine at position 46 (m7G46) in tRNA. In Legionella pneumophila (strain Lens), this protein is tRNA (guanine-N(7)-)-methyltransferase.